The chain runs to 128 residues: Entry-fusion complex protein OPG094 (128 aa).

Over 1–30 the chain is Intravirion; it reads MENVPNVYFNPVFIEPTFKHSLLSVYKHRL. Residues 31-51 form a helical; Signal-anchor for type III membrane protein membrane-spanning segment; the sequence is IVLFEVFVVFILIYVFFRSEL. Over 52–128 the chain is Virion surface; that stretch reads NMFFMPKRKI…PVSLNDVLRR (77 aa). C75 and C107 are joined by a disulfide.

This sequence belongs to the orthopoxvirus OPG099 family. Interacts with OPG086. Component of the entry fusion complex (EFC) composed of OPG053, OPG076, OPG086, OPG094, OPG095, OPG099, OPG107, OPG143, OPG104J5, OPG147 and OPG155. Except for OPG095 and OPG053, each of the EFC proteins is required for assembly or stability of the complex. Most cysteines are linked by disulfide bonds. They are created by the viral disulfide bond formation pathway, a poxvirus-specific redox pathway that operates on the cytoplasmic side of the MV membranes. Post-translationally, unglycosylated because produced in viral factories instead of the classic ER -Golgi route.

The protein localises to the virion membrane. Functionally, component of the entry fusion complex (EFC), which consists of 11 proteins. During cell infection, this complex mediates entry of the virion core into the host cytoplasm by a two-step mechanism consisting of lipid mixing of the viral and cellular membranes and subsequent pore formation. In Cynomys gunnisoni (Gunnison's prairie dog), this protein is Entry-fusion complex protein OPG094 (OPG099).